A 123-amino-acid chain; its full sequence is Small ribosomal subunit protein uS12 (123 aa).

A 3-methylthioaspartic acid modification is found at D89.

The protein belongs to the universal ribosomal protein uS12 family. In terms of assembly, part of the 30S ribosomal subunit. Contacts proteins S8 and S17. May interact with IF1 in the 30S initiation complex.

Its function is as follows. With S4 and S5 plays an important role in translational accuracy. Functionally, interacts with and stabilizes bases of the 16S rRNA that are involved in tRNA selection in the A site and with the mRNA backbone. Located at the interface of the 30S and 50S subunits, it traverses the body of the 30S subunit contacting proteins on the other side and probably holding the rRNA structure together. The combined cluster of proteins S8, S12 and S17 appears to hold together the shoulder and platform of the 30S subunit. This Bifidobacterium animalis subsp. lactis (strain AD011) protein is Small ribosomal subunit protein uS12.